The chain runs to 358 residues: Uroporphyrinogen decarboxylase (358 aa).

Substrate is bound by residues 36 to 40, Asp85, Tyr160, Ser215, and His338; that span reads RQAGR.

Belongs to the uroporphyrinogen decarboxylase family. Homodimer.

Its subcellular location is the cytoplasm. It carries out the reaction uroporphyrinogen III + 4 H(+) = coproporphyrinogen III + 4 CO2. Its pathway is porphyrin-containing compound metabolism; protoporphyrin-IX biosynthesis; coproporphyrinogen-III from 5-aminolevulinate: step 4/4. Its function is as follows. Catalyzes the decarboxylation of four acetate groups of uroporphyrinogen-III to yield coproporphyrinogen-III. The protein is Uroporphyrinogen decarboxylase of Corynebacterium glutamicum (strain R).